We begin with the raw amino-acid sequence, 262 residues long: Trypsin theta (262 aa).

Positions 1–19 (MHRLVVLLVCLAVGSACAG) are cleaved as a signal peptide. Positions 20–34 (TVGVSNGDPFEREGR) are cleaved as a propeptide — activation peptide. In terms of domain architecture, Peptidase S1 spans 35-260 (IVGGEDTTIG…LRKWILNASE (226 aa)). An intrachain disulfide couples Cys61 to Cys77. Catalysis depends on charge relay system residues His76 and Asp121. Intrachain disulfides connect Cys186/Cys203 and Cys212/Cys236. The active-site Charge relay system is Ser216.

It belongs to the peptidase S1 family.

It localises to the secreted. Its subcellular location is the extracellular space. The enzyme catalyses Preferential cleavage: Arg-|-Xaa, Lys-|-Xaa.. The protein is Trypsin theta (thetaTry) of Drosophila melanogaster (Fruit fly).